A 172-amino-acid polypeptide reads, in one-letter code: L-methionine sulfoximine/L-methionine sulfone acetyltransferase (172 aa).

The N-acetyltransferase domain maps to 3–166 (ASIRDAGVAD…DLTFMQLNLD (164 aa)). Substrate-binding positions include 75-77 (RPF) and 85-87 (EHS). Residues 88-90 (VYV), 96-101 (GKGLGV), and Asn-127 contribute to the acetyl-CoA site.

In terms of assembly, homodimer.

The catalysed reaction is L-methionine sulfoximine + acetyl-CoA = N-acetyl-L-methionine sulfoximine + CoA + H(+). The enzyme catalyses L-methionine sulfone + acetyl-CoA = N-acetyl-L-methionine sulfone + CoA + H(+). Functionally, plays a role in the resistance against the toxic effects of L-methionine sulfoximine (MSX), a rare amino acid, which inhibits glutamine synthetase (GlnA). Catalyzes the acetylation of L-methionine sulfoximine (MSX). It can also use L-methionine sulfone (MSO). The sequence is that of L-methionine sulfoximine/L-methionine sulfone acetyltransferase from Pseudomonas paraeruginosa (strain DSM 24068 / PA7) (Pseudomonas aeruginosa (strain PA7)).